Here is a 370-residue protein sequence, read N- to C-terminus: A-type ATP synthase subunit C (370 aa).

Belongs to the V-ATPase V0D/AC39 subunit family. Has multiple subunits with at least A(3), B(3), C, D, E, F, H, I and proteolipid K(x).

Its subcellular location is the cell membrane. In terms of biological role, component of the A-type ATP synthase that produces ATP from ADP in the presence of a proton gradient across the membrane. The polypeptide is A-type ATP synthase subunit C (Pyrococcus abyssi (strain GE5 / Orsay)).